Consider the following 344-residue polypeptide: Transcription factor HHO3 (344 aa).

2 disordered regions span residues 90 to 122 (KWSS…DKKK) and 156 to 212 (AFQP…KQRR). A compositionally biased stretch (acidic residues) spans 97-106 (DETDKDEEAE). A compositionally biased stretch (low complexity) spans 178–188 (TPTSTTTTSST). In terms of domain architecture, HTH myb-type spans 206–266 (SNRKQRRCWS…HLQKYRLHTR (61 aa)). The H-T-H motif DNA-binding region spans 237–262 (PKQIRDLMKVDGLTNDEVKSHLQKYR). Residues 306–344 (PVATQPPQSSTSGERSNRGCKSPATSSTTTHTPHLLPLS) are disordered. The span at 310–319 (QPPQSSTSGE) shows a compositional bias: polar residues. The span at 330 to 344 (TSSTTTHTPHLLPLS) shows a compositional bias: low complexity.

Its subcellular location is the nucleus. Probable transcription factor involved in phosphate signaling in roots. The sequence is that of Transcription factor HHO3 from Arabidopsis thaliana (Mouse-ear cress).